Consider the following 255-residue polypeptide: uncharacterized protein (255 aa).

The N-terminal stretch at 1–23 is a signal peptide; that stretch reads MKRLNTLVLYISFLILIISIVAG. C24 carries the N-palmitoyl cysteine lipid modification. C24 carries S-diacylglycerol cysteine lipidation.

This sequence belongs to the staphylococcal tandem lipoprotein family.

It is found in the cell membrane. This is an uncharacterized protein from Staphylococcus aureus (strain N315).